A 105-amino-acid chain; its full sequence is Keratin-associated protein 17-1 (105 aa).

Interacts with hair keratins.

Its function is as follows. In the hair cortex, hair keratin intermediate filaments are embedded in an interfilamentous matrix, consisting of hair keratin-associated proteins (KRTAP), which are essential for the formation of a rigid and resistant hair shaft through their extensive disulfide bond cross-linking with abundant cysteine residues of hair keratins. The matrix proteins include the high-sulfur and high-glycine-tyrosine keratins. The protein is Keratin-associated protein 17-1 (KRTAP17-1) of Homo sapiens (Human).